Consider the following 341-residue polypeptide: LRP2-binding protein (341 aa).

A TPR repeat occupies 56–89 (VQANFLLGQLFFEEGWYEDALLQFEKVKDEDNQA). 6 Sel1-like repeats span residues 90 to 122 (LYQA…TSDC), 130 to 165 (YAAA…DNGN), 170 to 203 (LKAQ…GNGS), 204 to 239 (LESQ…ERGN), 240 to 271 (VYAQ…SHDN), and 291 to 326 (AIAT…QLDA).

The protein localises to the cytoplasm. Functionally, may act as an adapter that regulates LRP2 function. The protein is LRP2-binding protein (lrp2bp) of Xenopus laevis (African clawed frog).